Reading from the N-terminus, the 338-residue chain is Probable dual-specificity RNA methyltransferase RlmN (338 aa).

Glu89 serves as the catalytic Proton acceptor. The Radical SAM core domain occupies His95–Asp325. Cys102 and Cys330 are joined by a disulfide. Residues Cys109, Cys113, and Cys116 each coordinate [4Fe-4S] cluster. S-adenosyl-L-methionine-binding positions include Gly156–Glu157, Ser188, Ser211–His213, and Asn287. Cys330 (S-methylcysteine intermediate) is an active-site residue.

The protein belongs to the radical SAM superfamily. RlmN family. It depends on [4Fe-4S] cluster as a cofactor.

The protein resides in the cytoplasm. It carries out the reaction adenosine(2503) in 23S rRNA + 2 reduced [2Fe-2S]-[ferredoxin] + 2 S-adenosyl-L-methionine = 2-methyladenosine(2503) in 23S rRNA + 5'-deoxyadenosine + L-methionine + 2 oxidized [2Fe-2S]-[ferredoxin] + S-adenosyl-L-homocysteine. The enzyme catalyses adenosine(37) in tRNA + 2 reduced [2Fe-2S]-[ferredoxin] + 2 S-adenosyl-L-methionine = 2-methyladenosine(37) in tRNA + 5'-deoxyadenosine + L-methionine + 2 oxidized [2Fe-2S]-[ferredoxin] + S-adenosyl-L-homocysteine. Specifically methylates position 2 of adenine 2503 in 23S rRNA and position 2 of adenine 37 in tRNAs. The protein is Probable dual-specificity RNA methyltransferase RlmN of Acholeplasma laidlawii (strain PG-8A).